Reading from the N-terminus, the 141-residue chain is Prefoldin subunit alpha (141 aa).

The protein belongs to the prefoldin subunit alpha family. In terms of assembly, heterohexamer of two alpha and four beta subunits.

Its subcellular location is the cytoplasm. Molecular chaperone capable of stabilizing a range of proteins. Seems to fulfill an ATP-independent, HSP70-like function in archaeal de novo protein folding. The protein is Prefoldin subunit alpha (pfdA) of Methanothermobacter thermautotrophicus (strain ATCC 29096 / DSM 1053 / JCM 10044 / NBRC 100330 / Delta H) (Methanobacterium thermoautotrophicum).